Here is a 191-residue protein sequence, read N- to C-terminus: PBAN-type neuropeptides (191 aa).

A signal peptide spans 1 to 17 (MFSPLLFFAVSISCVLA). Residue Leu-44 is modified to Leucine amide. A propeptide spanning residues 48–91 (SLRISTEDNRQAFFKLLEAADALKYYYDRLPYEMQADEPETRVT) is cleaved from the precursor. Leu-100, Leu-120, Leu-156, and Leu-166 each carry leucine amide. The propeptide occupies 169–191 (ELSYDMLPSKLRLVRSTNRTQST).

The protein belongs to the pyrokinin family. Expressed in the subesophageal ganglion.

Its subcellular location is the secreted. A hormone that controls sex pheromone production in females and pheromone responsiveness in male. This Spodoptera littoralis (Egyptian cotton leafworm) protein is PBAN-type neuropeptides.